A 202-amino-acid chain; its full sequence is ATP-dependent Clp protease proteolytic subunit (202 aa).

Ser-106 acts as the Nucleophile in catalysis. His-131 is a catalytic residue.

Belongs to the peptidase S14 family. Fourteen ClpP subunits assemble into 2 heptameric rings which stack back to back to give a disk-like structure with a central cavity, resembling the structure of eukaryotic proteasomes.

It is found in the cytoplasm. It catalyses the reaction Hydrolysis of proteins to small peptides in the presence of ATP and magnesium. alpha-casein is the usual test substrate. In the absence of ATP, only oligopeptides shorter than five residues are hydrolyzed (such as succinyl-Leu-Tyr-|-NHMec, and Leu-Tyr-Leu-|-Tyr-Trp, in which cleavage of the -Tyr-|-Leu- and -Tyr-|-Trp bonds also occurs).. Cleaves peptides in various proteins in a process that requires ATP hydrolysis. Has a chymotrypsin-like activity. Plays a major role in the degradation of misfolded proteins. This chain is ATP-dependent Clp protease proteolytic subunit, found in Shewanella baltica (strain OS223).